The primary structure comprises 89 residues: Small ribosomal subunit protein uS15 (89 aa).

The span at 1–21 (MALSPEKKNEIIENFKTHEGD) shows a compositional bias: basic and acidic residues. The segment at 1–23 (MALSPEKKNEIIENFKTHEGDTG) is disordered.

It belongs to the universal ribosomal protein uS15 family. Part of the 30S ribosomal subunit. Forms a bridge to the 50S subunit in the 70S ribosome, contacting the 23S rRNA.

One of the primary rRNA binding proteins, it binds directly to 16S rRNA where it helps nucleate assembly of the platform of the 30S subunit by binding and bridging several RNA helices of the 16S rRNA. Functionally, forms an intersubunit bridge (bridge B4) with the 23S rRNA of the 50S subunit in the ribosome. The polypeptide is Small ribosomal subunit protein uS15 (Desulforamulus reducens (strain ATCC BAA-1160 / DSM 100696 / MI-1) (Desulfotomaculum reducens)).